The following is a 398-amino-acid chain: 1-aminocyclopropane-1-carboxylate oxidase homolog 5 (398 aa).

The Fe2OG dioxygenase domain maps to 247 to 347; the sequence is KSHIMFGQYY…RISMPCFVST (101 aa). Fe cation contacts are provided by histidine 271, aspartate 273, and histidine 327. Position 338 (arginine 338) interacts with 2-oxoglutarate.

The protein belongs to the iron/ascorbate-dependent oxidoreductase family. Fe(2+) serves as cofactor. In terms of tissue distribution, expressed in etiolated seedlings, leaves, stems and flowers.

The chain is 1-aminocyclopropane-1-carboxylate oxidase homolog 5 (2A6) from Arabidopsis thaliana (Mouse-ear cress).